The following is a 427-amino-acid chain: MSNNQTLFERAQRTIPGGVNSPVRAFRSVGGTPRFVARAQGAYFWDADGKRYIDYIGSWGPMIVGHVHPDVLAAVQRVLADGFSFGAPTEAEIEIAEEICKLVPSIEQVRMVSSGTEATMSALRLARGFTGRSRIVKFEGCYHGHADSLLVKAGSGLLTFGNPTSAGVPADVAKHTTVLEYNNVAALEEAFAAFGGEIAAVIVEPVAGNMNLVRGTPEFLNALRALTAKHGAVLIFDEVMCGFRVALGGAQQHYGITPDLTCLGKVIGGGMPAAAFGGRGDIMSHLAPLGDVYQAGTLSGNPVAVAAGLATLRLIQAPGFHDALADKTRRLADGLAAEARAAGVPFSADAIGGMFGLYFTEQVPASFADVTKSDIERFNRFFHLMLDAGVYFAPSAYEAGFVSSAHDDATLDATLDAARRAFAALRA.

Lys265 bears the N6-(pyridoxal phosphate)lysine mark.

It belongs to the class-III pyridoxal-phosphate-dependent aminotransferase family. HemL subfamily. In terms of assembly, homodimer. It depends on pyridoxal 5'-phosphate as a cofactor.

Its subcellular location is the cytoplasm. It carries out the reaction (S)-4-amino-5-oxopentanoate = 5-aminolevulinate. The protein operates within porphyrin-containing compound metabolism; protoporphyrin-IX biosynthesis; 5-aminolevulinate from L-glutamyl-tRNA(Glu): step 2/2. The protein is Glutamate-1-semialdehyde 2,1-aminomutase of Burkholderia mallei (strain NCTC 10229).